The sequence spans 570 residues: Urease subunit alpha (570 aa).

The region spanning 131 to 570 (GGMDSHIHFI…LPMAQRYFLF (440 aa)) is the Urease domain. The Ni(2+) site is built by His-136, His-138, and Lys-219. Lys-219 is modified (N6-carboxylysine). His-221 provides a ligand contact to substrate. The Ni(2+) site is built by His-248 and His-274. His-322 (proton donor) is an active-site residue. Position 362 (Asp-362) interacts with Ni(2+).

This sequence belongs to the metallo-dependent hydrolases superfamily. Urease alpha subunit family. In terms of assembly, heterotrimer of UreA (gamma), UreB (beta) and UreC (alpha) subunits. Three heterotrimers associate to form the active enzyme. It depends on Ni cation as a cofactor. Carboxylation allows a single lysine to coordinate two nickel ions.

The protein localises to the cytoplasm. The catalysed reaction is urea + 2 H2O + H(+) = hydrogencarbonate + 2 NH4(+). It functions in the pathway nitrogen metabolism; urea degradation; CO(2) and NH(3) from urea (urease route): step 1/1. The chain is Urease subunit alpha from Rhizobium etli (strain ATCC 51251 / DSM 11541 / JCM 21823 / NBRC 15573 / CFN 42).